Here is a 104-residue protein sequence, read N- to C-terminus: Large ribosomal subunit protein uL24 (104 aa).

Belongs to the universal ribosomal protein uL24 family. As to quaternary structure, part of the 50S ribosomal subunit.

Its function is as follows. One of two assembly initiator proteins, it binds directly to the 5'-end of the 23S rRNA, where it nucleates assembly of the 50S subunit. One of the proteins that surrounds the polypeptide exit tunnel on the outside of the subunit. The polypeptide is Large ribosomal subunit protein uL24 (Ectopseudomonas mendocina (strain ymp) (Pseudomonas mendocina)).